Consider the following 239-residue polypeptide: MLEIGFCTLEDQCPYLKDKRSRIEYKYIENCSKEINNELIKRGWRRFGRYFSRPICKDCDECLSLRILVNEYNFSRSERRVINKNINTKVILRTPNLSNEHLFLYDKYHRFMEEKKNWKRYDLSFKQYYNLYVDGFMNFGYELAFYIEDKLVCVDLIDILEDGISSIYCFYDPDFSYFSLGKFSLLNEIQIAKKMNLDYIYLGYFVKKCQSLSYKADYTPNEILKGTKELFENEVLWEK.

Belongs to the R-transferase family. Bpt subfamily.

It is found in the cytoplasm. The enzyme catalyses N-terminal L-glutamyl-[protein] + L-leucyl-tRNA(Leu) = N-terminal L-leucyl-L-glutamyl-[protein] + tRNA(Leu) + H(+). It catalyses the reaction N-terminal L-aspartyl-[protein] + L-leucyl-tRNA(Leu) = N-terminal L-leucyl-L-aspartyl-[protein] + tRNA(Leu) + H(+). Functions in the N-end rule pathway of protein degradation where it conjugates Leu from its aminoacyl-tRNA to the N-termini of proteins containing an N-terminal aspartate or glutamate. The sequence is that of Aspartate/glutamate leucyltransferase from Campylobacter jejuni subsp. jejuni serotype O:6 (strain 81116 / NCTC 11828).